A 389-amino-acid chain; its full sequence is Large ribosomal subunit protein uL3 (389 aa).

The protein belongs to the universal ribosomal protein uL3 family.

The protein localises to the cytoplasm. This chain is Large ribosomal subunit protein uL3 (RPL3), found in Debaryomyces hansenii (strain ATCC 36239 / CBS 767 / BCRC 21394 / JCM 1990 / NBRC 0083 / IGC 2968) (Yeast).